A 342-amino-acid chain; its full sequence is Ribosomal RNA small subunit methyltransferase C (342 aa).

Belongs to the methyltransferase superfamily. RsmC family. As to quaternary structure, monomer.

Its subcellular location is the cytoplasm. It catalyses the reaction guanosine(1207) in 16S rRNA + S-adenosyl-L-methionine = N(2)-methylguanosine(1207) in 16S rRNA + S-adenosyl-L-homocysteine + H(+). In terms of biological role, specifically methylates the guanine in position 1207 of 16S rRNA in the 30S particle. The sequence is that of Ribosomal RNA small subunit methyltransferase C from Enterobacter sp. (strain 638).